The following is a 312-amino-acid chain: Olfactory receptor 2M3 (312 aa).

Over 1–25 (MARENSTFNSDFILLGIFNHSPTHT) the chain is Extracellular. The N-linked (GlcNAc...) asparagine glycan is linked to N5. Residues 26–49 (FLFFLVLAIFSVAFMGNSVMVLLI) traverse the membrane as a helical segment. Residues 50–57 (YLDTQLHT) are Cytoplasmic-facing. The helical transmembrane segment at 58-79 (PMYLLLSQLSLMDLMLICTTVP) threads the bilayer. Residues 80 to 100 (KMAFNYLSGSKSISMAGCATQ) lie on the Extracellular side of the membrane. A disulfide bridge connects residues C97 and C189. The chain crosses the membrane as a helical span at residues 101–120 (IFFYTSLLGSECFLLAVMAY). Over 121-139 (DRYTAICHPLRYTNLMSPK) the chain is Cytoplasmic. A helical transmembrane segment spans residues 140-158 (ICGLMTAFSWILGSTDGII). Residues 159 to 195 (DVVATFSFSYCGSREIAHFFCDFPSLLILSCSDTSIF) are Extracellular-facing. Residues 196–219 (EKILFICCIVMIVFPVAIIIASYA) traverse the membrane as a helical segment. Topologically, residues 220 to 236 (RVILAVIHMGSGEGRRK) are cytoplasmic. A helical transmembrane segment spans residues 237–259 (AFTTCSSHLLVVGMYYGAALFMY). Topologically, residues 260–272 (IRPTSDRSPTQDK) are extracellular. A helical transmembrane segment spans residues 273–292 (MVSVFYTILTPMLNPLIYSL). Topologically, residues 293 to 312 (RNKEVTRAFMKILGKGKSGE) are cytoplasmic.

The protein belongs to the G-protein coupled receptor 1 family.

It is found in the cell membrane. In terms of biological role, odorant receptor. The polypeptide is Olfactory receptor 2M3 (OR2M3) (Homo sapiens (Human)).